The chain runs to 65 residues: Gallinacin-1 alpha (65 aa).

An N-terminal signal peptide occupies residues 1 to 19 (MRIVYLLLPFILLLAQGAA). The propeptide occupies 20 to 25 (GSSQAL). 3 disulfides stabilise this stretch: C31–C59, C38–C53, and C43–C60.

The protein belongs to the beta-defensin family.

The protein localises to the secreted. It localises to the cytoplasmic granule. Has bactericidal activity. Potent activity against E.coli ML-35, L.monocytogenes EGD and C.albicans. The sequence is that of Gallinacin-1 alpha from Gallus gallus (Chicken).